Here is a 160-residue protein sequence, read N- to C-terminus: uncharacterized protein (160 aa).

One can recognise an N-acetyltransferase domain in the interval 7–151; sequence LLINYKTLEE…NPLIWHPDMD (145 aa).

This is an uncharacterized protein from Bacillus subtilis (strain 168).